A 348-amino-acid polypeptide reads, in one-letter code: VIP36-like protein (348 aa).

An N-terminal signal peptide occupies residues 1–44; sequence MAATLGPLGSWQQWRRCLSARDGSRMLLLLLLLGSGQGPQQVGA. Topologically, residues 45 to 313 are lumenal; it reads GQTFEYLKRE…APLPPLSGLA (269 aa). The L-type lectin-like domain occupies 49–274; it reads EYLKREHSLS…DVISLKLFEL (226 aa). A carbohydrate-binding residues include Ser-93 and Asp-128. Positions 159, 161, and 163 each coordinate Ca(2+). 161-163 contacts a carbohydrate; it reads YPN. Asn-181 is a glycosylation site (N-linked (GlcNAc...) (high mannose) asparagine). His-188 contributes to the a carbohydrate binding site. Position 191 (Asp-191) interacts with Ca(2+). Cys-200 and Cys-237 are disulfide-bonded. 258-260 is an a carbohydrate binding site; the sequence is GDL. A helical membrane pass occupies residues 314–336; it reads LFLIVFFSLVFSVFAIVIGIILY. Over 337 to 348 the chain is Cytoplasmic; the sequence is NKWQEQSRKRFY. The short motif at 344–346 is the Endoplasmic reticulum retention signal element; that stretch reads RKR.

Expressed in numerous tissues. Highest expression in skeletal muscle and kidney, intermediate levels in heart, liver and placenta, low levels in brain, thymus, spleen, small intestine and lung.

The protein localises to the endoplasmic reticulum membrane. Its subcellular location is the golgi apparatus membrane. In terms of biological role, may be involved in the regulation of export from the endoplasmic reticulum of a subset of glycoproteins. May function as a regulator of ERGIC-53. This is VIP36-like protein (LMAN2L) from Homo sapiens (Human).